The following is a 560-amino-acid chain: DNA ligase B (560 aa).

The N6-AMP-lysine intermediate role is filled by lysine 124.

Belongs to the NAD-dependent DNA ligase family. LigB subfamily.

It carries out the reaction NAD(+) + (deoxyribonucleotide)n-3'-hydroxyl + 5'-phospho-(deoxyribonucleotide)m = (deoxyribonucleotide)n+m + AMP + beta-nicotinamide D-nucleotide.. Functionally, catalyzes the formation of phosphodiester linkages between 5'-phosphoryl and 3'-hydroxyl groups in double-stranded DNA using NAD as a coenzyme and as the energy source for the reaction. The sequence is that of DNA ligase B from Escherichia coli (strain SMS-3-5 / SECEC).